The primary structure comprises 372 residues: Alpha-L-fucosidase 3 (372 aa).

The signal sequence occupies residues 1–23 (MNPILSSLFALSLLSSLSPSTHA). S37 (nucleophile) is an active-site residue. N-linked (GlcNAc...) asparagine glycans are attached at residues N96, N114, N139, and N182. Residues D345 and H348 contribute to the active site.

It belongs to the 'GDSL' lipolytic enzyme family. As to expression, high expression in younger leaves and in the apical region of the inflorescence stem.

Its subcellular location is the secreted. The protein resides in the extracellular space. It is found in the apoplast. It catalyses the reaction an alpha-L-fucoside + H2O = L-fucose + an alcohol. Hydrolyzes alpha-1,2-linked fucose. Also active on fucosylated xyloglucan oligosaccharides. The sequence is that of Alpha-L-fucosidase 3 (FXG1) from Arabidopsis thaliana (Mouse-ear cress).